A 272-amino-acid polypeptide reads, in one-letter code: Tryptophan synthase alpha chain (272 aa).

Active-site proton acceptor residues include E49 and D60.

Belongs to the TrpA family. As to quaternary structure, tetramer of two alpha and two beta chains.

It carries out the reaction (1S,2R)-1-C-(indol-3-yl)glycerol 3-phosphate + L-serine = D-glyceraldehyde 3-phosphate + L-tryptophan + H2O. Its pathway is amino-acid biosynthesis; L-tryptophan biosynthesis; L-tryptophan from chorismate: step 5/5. Its function is as follows. The alpha subunit is responsible for the aldol cleavage of indoleglycerol phosphate to indole and glyceraldehyde 3-phosphate. The sequence is that of Tryptophan synthase alpha chain from Methylibium petroleiphilum (strain ATCC BAA-1232 / LMG 22953 / PM1).